A 338-amino-acid chain; its full sequence is Tripartite motif-containing protein 44 (338 aa).

2 disordered regions span residues 1–25 (MASGGGAAFEELPHDGTCDECEPDE) and 72–162 (ARGD…EFDP). Residues 95 to 162 (EAGEGIESEE…ETEAESEFDP (68 aa)) show a composition bias toward acidic residues. Residues 109-153 (EEESETEEESEDESEEDSEEEMEDEQESEAEEDNQEEGESEAEGE) are a coiled coil. The B box-type zinc-finger motif lies at 171-212 (VAKRKCPDHGLDLSTYCQEDKQLICVLCPVIGAHHGHHLSTL). The Zn(2+) site is built by Cys176, His179, Cys198, and His204. The stretch at 257–322 (QQEFKKVQKV…QLDTSNESAE (66 aa)) forms a coiled coil. Residues 307-338 (MAQAKEQLDTSNESAEPKAEGDEEEPGGTDED) are disordered. The span at 327–338 (GDEEEPGGTDED) shows a compositional bias: acidic residues.

As to quaternary structure, interacts (via coiled coil) with TRIM17 (via coiled coil).

May play a role in the process of differentiation and maturation of neuronal cells. May regulate the activity of TRIM17. Is a negative regulator of PAX6 expression. This Bos taurus (Bovine) protein is Tripartite motif-containing protein 44 (TRIM44).